We begin with the raw amino-acid sequence, 511 residues long: Xylose import ATP-binding protein XylG (511 aa).

2 consecutive ABC transporter domains span residues 6–244 (LEMR…VGRE) and 261–506 (FEAR…IGKP).

This sequence belongs to the ABC transporter superfamily. Xylose importer (TC 3.A.1.2.4) family. In terms of assembly, the complex is composed of two ATP-binding proteins (XylG), two transmembrane proteins (XylH) and a solute-binding protein (XylF).

It is found in the cell inner membrane. The enzyme catalyses D-xylose(out) + ATP + H2O = D-xylose(in) + ADP + phosphate + H(+). Part of the ABC transporter complex XylFGH involved in xylose import. Responsible for energy coupling to the transport system. This chain is Xylose import ATP-binding protein XylG, found in Brucella melitensis biotype 1 (strain ATCC 23456 / CCUG 17765 / NCTC 10094 / 16M).